The primary structure comprises 525 residues: uncharacterized protein (525 aa).

The N-terminal stretch at 1-21 (MLECLSALLVLFAGGGGSVLA) is a signal peptide. Topologically, residues 22 to 448 (AVQSKTVADP…ISAASQLDER (427 aa)) are extracellular. The tract at residues 242–264 (KVSSENCSKDTDDKSGSKKERNT) is disordered. A helical membrane pass occupies residues 449–469 (IFIFTAITVSITTLMMLGFSY). The Cytoplasmic segment spans residues 470-525 (RSRVSFRDHSIDDSDDDNDWSDDEVEFDEEYFYSLPVSIPEKGISLDKMAQQLGVE).

Its subcellular location is the membrane. This is an uncharacterized protein from Saccharomyces cerevisiae (strain RM11-1a) (Baker's yeast).